The following is a 290-amino-acid chain: uncharacterized protein (290 aa).

Transmembrane regions (helical) follow at residues 14–34 (ALLN…IGIL), 82–102 (ISSL…LIGG), 115–135 (NLIA…IYLY), 158–174 (DAFV…SSQL), and 176–196 (LPWV…KTAW).

This sequence belongs to the cation diffusion facilitator (CDF) transporter (TC 2.A.4) family.

It localises to the cell membrane. This is an uncharacterized protein from Bacillus subtilis (strain 168).